A 723-amino-acid chain; its full sequence is DNA-binding protein RFX2 (723 aa).

The disordered stretch occupies residues 1-46; that stretch reads MQNSEGGADSPASVALRPSAAAPPVPASPQRVLVQAASSNPKGAQM. Positions 10–20 are enriched in low complexity; that stretch reads SPASVALRPSA. The residue at position 28 (Ser28) is a Phosphoserine. A DNA-binding region (RFX-type winged-helix) is located at residues 199–274; sequence HLQWLLDNYE…YHYYGIRLKP (76 aa). Residues 292-332 form a disordered region; that stretch reads QQPMHQKPRYRPAQKTDSLGDSGSHSGLHSTPEQTMAVQSQ. Over residues 308–321 the composition is skewed to low complexity; the sequence is DSLGDSGSHSGLHS. Over residues 322-332 the composition is skewed to polar residues; it reads TPEQTMAVQSQ. Ser416 is subject to Phosphoserine. The tract at residues 688–723 is disordered; the sequence is MGDEQRGSEAGPDARSLGEPLVKRERSDPNHSLQGI.

Belongs to the RFX family. Homodimer; probably only forms homodimers in testis. Heterodimer; heterodimerizes with RFX1 and RFX3.

The protein localises to the nucleus. It localises to the cytoplasm. Functionally, transcription factor that acts as a key regulator of spermatogenesis. Acts by regulating expression of genes required for the haploid phase during spermiogenesis, such as genes required for cilium assembly and function. Recognizes and binds the X-box, a regulatory motif with DNA sequence 5'-GTNRCC(0-3N)RGYAAC-3' present on promoters. Probably activates transcription of the testis-specific histone gene H1-6. The chain is DNA-binding protein RFX2 (RFX2) from Homo sapiens (Human).